A 357-amino-acid polypeptide reads, in one-letter code: Transcription factor HHO1 (357 aa).

Disordered stretches follow at residues 94 to 117 (TSIE…ETDI) and 171 to 198 (NNNI…RKNR). The segment covering 96–109 (IEEEVDDKDDDDEE) has biased composition (acidic residues). Polar residues predominate over residues 171–182 (NNNIKSPVTTSD). The HTH myb-type domain occupies 193–253 (GQRKNRRCWS…HLQKYRLHAR (61 aa)). Positions 224 to 249 (PKQIRDIMKVDGLTNDEVKSHLQKYR) form a DNA-binding region, H-T-H motif.

The protein resides in the nucleus. Probable factor involved in nitrate and phosphate signaling in roots. Integrates nitrate and phosphate starvation responses and adaptation of root architecture, depending on nutrient availabilities. Acts downstream of the nitrate sensor and transporter NPF6.3/NRT1.1. Represses primary root development in response to phosphate deficiency conditions, only when nitrate is present. The protein is Transcription factor HHO1 of Arabidopsis thaliana (Mouse-ear cress).